The following is a 378-amino-acid chain: Succinyl-diaminopimelate desuccinylase (378 aa).

His-68 is a binding site for Zn(2+). Asp-70 is an active-site residue. Asp-101 contacts Zn(2+). Glu-135 functions as the Proton acceptor in the catalytic mechanism. Positions 136, 164, and 350 each coordinate Zn(2+).

It belongs to the peptidase M20A family. DapE subfamily. In terms of assembly, homodimer. It depends on Zn(2+) as a cofactor. Co(2+) is required as a cofactor.

The enzyme catalyses N-succinyl-(2S,6S)-2,6-diaminopimelate + H2O = (2S,6S)-2,6-diaminopimelate + succinate. The protein operates within amino-acid biosynthesis; L-lysine biosynthesis via DAP pathway; LL-2,6-diaminopimelate from (S)-tetrahydrodipicolinate (succinylase route): step 3/3. In terms of biological role, catalyzes the hydrolysis of N-succinyl-L,L-diaminopimelic acid (SDAP), forming succinate and LL-2,6-diaminopimelate (DAP), an intermediate involved in the bacterial biosynthesis of lysine and meso-diaminopimelic acid, an essential component of bacterial cell walls. The protein is Succinyl-diaminopimelate desuccinylase of Acinetobacter baumannii (strain ACICU).